The following is a 217-amino-acid chain: Large ribosomal subunit protein uL4c (217 aa).

The segment at 51 to 85 is disordered; sequence HRNRNAHTQTRGEVSGGGRKPWKQKGTGRARAGSN.

Belongs to the universal ribosomal protein uL4 family. In terms of assembly, part of the 50S ribosomal subunit.

The protein localises to the plastid. It localises to the chloroplast. Functionally, probably binds the 23S rRNA. The chain is Large ribosomal subunit protein uL4c (rpl4) from Gracilaria tenuistipitata var. liui (Red alga).